The chain runs to 281 residues: NADPH-dependent 7-cyano-7-deazaguanine reductase (281 aa).

88–90 lines the substrate pocket; the sequence is IES. 90-91 serves as a coordination point for NADPH; sequence SK. The active-site Thioimide intermediate is the cysteine 189. Aspartate 196 (proton donor) is an active-site residue. 228–229 is a binding site for substrate; that stretch reads HE. 257-258 contacts NADPH; it reads RG.

The protein belongs to the GTP cyclohydrolase I family. QueF type 2 subfamily. Homodimer.

The protein localises to the cytoplasm. It catalyses the reaction 7-aminomethyl-7-carbaguanine + 2 NADP(+) = 7-cyano-7-deazaguanine + 2 NADPH + 3 H(+). Its pathway is tRNA modification; tRNA-queuosine biosynthesis. Functionally, catalyzes the NADPH-dependent reduction of 7-cyano-7-deazaguanine (preQ0) to 7-aminomethyl-7-deazaguanine (preQ1). The sequence is that of NADPH-dependent 7-cyano-7-deazaguanine reductase from Yersinia enterocolitica serotype O:8 / biotype 1B (strain NCTC 13174 / 8081).